The following is a 243-amino-acid chain: Uridylate kinase (243 aa).

15 to 18 serves as a coordination point for ATP; it reads KLSG. The tract at residues 23 to 28 is involved in allosteric activation by GTP; that stretch reads GEEGFG. G57 serves as a coordination point for UMP. The ATP site is built by G58 and R62. UMP is bound by residues D77 and 138–145; that span reads TGNPFFTT. The ATP site is built by T165, F171, and D174.

It belongs to the UMP kinase family. In terms of assembly, homohexamer.

The protein localises to the cytoplasm. It carries out the reaction UMP + ATP = UDP + ADP. It participates in pyrimidine metabolism; CTP biosynthesis via de novo pathway; UDP from UMP (UMPK route): step 1/1. Its activity is regulated as follows. Allosterically activated by GTP. Inhibited by UTP. Functionally, catalyzes the reversible phosphorylation of UMP to UDP. In Aliivibrio fischeri (strain ATCC 700601 / ES114) (Vibrio fischeri), this protein is Uridylate kinase.